Consider the following 354-residue polypeptide: S-adenosylmethionine:tRNA ribosyltransferase-isomerase (354 aa).

This sequence belongs to the QueA family. Monomer.

The protein localises to the cytoplasm. The enzyme catalyses 7-aminomethyl-7-carbaguanosine(34) in tRNA + S-adenosyl-L-methionine = epoxyqueuosine(34) in tRNA + adenine + L-methionine + 2 H(+). The protein operates within tRNA modification; tRNA-queuosine biosynthesis. In terms of biological role, transfers and isomerizes the ribose moiety from AdoMet to the 7-aminomethyl group of 7-deazaguanine (preQ1-tRNA) to give epoxyqueuosine (oQ-tRNA). This chain is S-adenosylmethionine:tRNA ribosyltransferase-isomerase, found in Salmonella schwarzengrund (strain CVM19633).